Here is a 139-residue protein sequence, read N- to C-terminus: uncharacterized protein (139 aa).

Positions 1-133 constitute a Globin domain; the sequence is MLSEETIRVI…LAKTLITLEK (133 aa).

This sequence belongs to the globin family.

This is an uncharacterized protein from Aquifex aeolicus (strain VF5).